The sequence spans 151 residues: UPF0178 protein Pfl01_5469 (151 aa).

It belongs to the UPF0178 family.

In Pseudomonas fluorescens (strain Pf0-1), this protein is UPF0178 protein Pfl01_5469.